A 132-amino-acid polypeptide reads, in one-letter code: Small ribosomal subunit protein eS12 (132 aa).

This sequence belongs to the eukaryotic ribosomal protein eS12 family.

The protein is Small ribosomal subunit protein eS12 (rps12) of Oreochromis niloticus (Nile tilapia).